The chain runs to 672 residues: Glycerophosphocholine phosphodiesterase GPCPD1 (672 aa).

One can recognise a CBM20 domain in the interval Met1–Ile115. Residues Lys70 and His88–Lys89 contribute to the substrate site. 2 positions are modified to phosphoserine: Ser175 and Ser424. Residues Pro318 to Gln618 form the GP-PDE domain. Residue Tyr608 is modified to Phosphotyrosine.

It belongs to the glycerophosphoryl diester phosphodiesterase family. In terms of tissue distribution, widely expressed, with highest expression in spinal chord.

It is found in the cytoplasm. The protein localises to the cytosol. It catalyses the reaction sn-glycerol 3-phosphocholine + H2O = sn-glycerol 3-phosphate + choline + H(+). In terms of biological role, may be involved in the negative regulation of skeletal muscle differentiation, independently of its glycerophosphocholine phosphodiesterase activity. This Homo sapiens (Human) protein is Glycerophosphocholine phosphodiesterase GPCPD1 (GPCPD1).